Reading from the N-terminus, the 581-residue chain is Aspartate--tRNA ligase (581 aa).

Glu170 is an L-aspartate binding site. The tract at residues 194–197 is aspartate; sequence QLFK. Residue Arg216 coordinates L-aspartate. Residues 216–218 and Gln225 each bind ATP; that span reads RDE. His440 provides a ligand contact to L-aspartate. Glu469 serves as a coordination point for ATP. Position 476 (Arg476) interacts with L-aspartate. An ATP-binding site is contributed by 521 to 524; that stretch reads GFDR.

It belongs to the class-II aminoacyl-tRNA synthetase family. Type 1 subfamily. As to quaternary structure, homodimer.

It is found in the cytoplasm. The catalysed reaction is tRNA(Asp) + L-aspartate + ATP = L-aspartyl-tRNA(Asp) + AMP + diphosphate. Catalyzes the attachment of L-aspartate to tRNA(Asp) in a two-step reaction: L-aspartate is first activated by ATP to form Asp-AMP and then transferred to the acceptor end of tRNA(Asp). The sequence is that of Aspartate--tRNA ligase from Thermosipho africanus (strain TCF52B).